The chain runs to 842 residues: Glucans biosynthesis glucosyltransferase H (842 aa).

A run of 7 helical transmembrane segments spans residues 140–160 (ILLL…KTIL), 194–214 (ILIL…TALM), 513–533 (VFLT…FLAL), 570–590 (LFAS…MLIW), 615–635 (VLLA…AFLG), 656–676 (FMRH…MAWL), and 680–700 (FLFW…VSVV).

It belongs to the glycosyltransferase 2 family. OpgH subfamily.

The protein resides in the cell inner membrane. It functions in the pathway glycan metabolism; osmoregulated periplasmic glucan (OPG) biosynthesis. Its function is as follows. Involved in the biosynthesis of osmoregulated periplasmic glucans (OPGs). The chain is Glucans biosynthesis glucosyltransferase H from Citrobacter koseri (strain ATCC BAA-895 / CDC 4225-83 / SGSC4696).